The following is a 453-amino-acid chain: Kynurenine 3-monooxygenase (453 aa).

It belongs to the aromatic-ring hydroxylase family. KMO subfamily. The cofactor is FAD.

It catalyses the reaction L-kynurenine + NADPH + O2 + H(+) = 3-hydroxy-L-kynurenine + NADP(+) + H2O. It functions in the pathway cofactor biosynthesis; NAD(+) biosynthesis; quinolinate from L-kynurenine: step 1/3. Catalyzes the hydroxylation of L-kynurenine (L-Kyn) to form 3-hydroxy-L-kynurenine (L-3OHKyn). Required for synthesis of quinolinic acid. The chain is Kynurenine 3-monooxygenase from Salinispora tropica (strain ATCC BAA-916 / DSM 44818 / JCM 13857 / NBRC 105044 / CNB-440).